A 175-amino-acid polypeptide reads, in one-letter code: MRRQRSAVPILALLALLALLALIVGLGASGCAWKPPTTRPSPPNTCKDSDGPTADTVRQAIAAVPIVVPGSKWVEITRGHTRNCRLHWVQIIPTIASQSTPQQLLFFDRNIPLGSPTRNPKPYITVLPAGDDTVTVQYQWQIGSDQECCPTGIGTVRFHIGSDGKLEALGSIPHQ.

The signal sequence occupies residues 1-30 (MRRQRSAVPILALLALLALLALIVGLGASG). A lipid anchor (N-palmitoyl cysteine) is attached at Cys-31. Cys-31 carries S-diacylglycerol cysteine lipidation.

The protein resides in the cell membrane. In Mycobacterium bovis (strain ATCC BAA-935 / AF2122/97), this protein is Putative lipoprotein LppP (lppP).